The sequence spans 410 residues: Multifunctional CCA protein (410 aa).

ATP-binding residues include G8 and R11. The CTP site is built by G8 and R11. Positions 21 and 23 each coordinate Mg(2+). R91, R137, and R140 together coordinate ATP. Positions 91, 137, and 140 each coordinate CTP. The HD domain maps to 228 to 329 (TGIHSLMALR…VKLLEQVDAF (102 aa)).

Belongs to the tRNA nucleotidyltransferase/poly(A) polymerase family. Bacterial CCA-adding enzyme type 1 subfamily. In terms of assembly, monomer. Can also form homodimers and oligomers. It depends on Mg(2+) as a cofactor. The cofactor is Ni(2+).

It carries out the reaction a tRNA precursor + 2 CTP + ATP = a tRNA with a 3' CCA end + 3 diphosphate. It catalyses the reaction a tRNA with a 3' CCA end + 2 CTP + ATP = a tRNA with a 3' CCACCA end + 3 diphosphate. Functionally, catalyzes the addition and repair of the essential 3'-terminal CCA sequence in tRNAs without using a nucleic acid template. Adds these three nucleotides in the order of C, C, and A to the tRNA nucleotide-73, using CTP and ATP as substrates and producing inorganic pyrophosphate. tRNA 3'-terminal CCA addition is required both for tRNA processing and repair. Also involved in tRNA surveillance by mediating tandem CCA addition to generate a CCACCA at the 3' terminus of unstable tRNAs. While stable tRNAs receive only 3'-terminal CCA, unstable tRNAs are marked with CCACCA and rapidly degraded. This chain is Multifunctional CCA protein, found in Legionella pneumophila (strain Paris).